We begin with the raw amino-acid sequence, 805 residues long: Leucine--tRNA ligase (805 aa).

The 'HIGH' region signature appears at 40–51 (PYPSGAGLHVGH). Positions 576 to 580 (KMSKS) match the 'KMSKS' region motif. Position 579 (Lys579) interacts with ATP.

The protein belongs to the class-I aminoacyl-tRNA synthetase family.

It is found in the cytoplasm. It carries out the reaction tRNA(Leu) + L-leucine + ATP = L-leucyl-tRNA(Leu) + AMP + diphosphate. The protein is Leucine--tRNA ligase of Brevibacillus brevis (strain 47 / JCM 6285 / NBRC 100599).